Reading from the N-terminus, the 335-residue chain is Nonaprenyl diphosphate synthase (335 aa).

3 residues coordinate isopentenyl diphosphate: Lys57, Arg60, and His90. Mg(2+)-binding residues include Asp97 and Asp101. The DDXXD motif motif lies at 97-101 (DDVMD). Arg107 lines the isopentenyl diphosphate pocket. The short motif at 223–227 (DDIID) is the DDXXD motif element.

Belongs to the FPP/GGPP synthase family. The cofactor is Mg(2+).

The catalysed reaction is isopentenyl diphosphate + (2E)-geranyl diphosphate = (2E,6E)-farnesyl diphosphate + diphosphate. It carries out the reaction isopentenyl diphosphate + (2E,6E)-farnesyl diphosphate = (2E,6E,10E)-geranylgeranyl diphosphate + diphosphate. The enzyme catalyses 5 isopentenyl diphosphate + (2E,6E,10E)-geranylgeranyl diphosphate = all-trans-nonaprenyl diphosphate + 5 diphosphate. The protein operates within isoprenoid biosynthesis; farnesyl diphosphate biosynthesis; farnesyl diphosphate from geranyl diphosphate and isopentenyl diphosphate. Its pathway is isoprenoid biosynthesis; geranylgeranyl diphosphate biosynthesis; geranylgeranyl diphosphate from farnesyl diphosphate and isopentenyl diphosphate: step 1/1. Catalyzes the sequential condensations of isopentenyl pyrophosphate (IPP) with geranyl diphosphate (GPP) to yield (2E,6E)-farnesyl diphosphate (E,E-FPP), with E,E-FPP to yield geranylgeranyl diphosphate (GGPP) and with GGPP to yield nonaprenyl diphosphate. May also have weak activity with dimethylallyl diphosphate (DMAPP). This chain is Nonaprenyl diphosphate synthase, found in Mycobacterium tuberculosis (strain ATCC 25618 / H37Rv).